A 349-amino-acid chain; its full sequence is Putative F-box/kelch-repeat protein At4g02310 (349 aa).

The 48-residue stretch at Ser-11–Leu-58 folds into the F-box domain. Residues Lys-154–Pro-204 form a Kelch repeat.

This Arabidopsis thaliana (Mouse-ear cress) protein is Putative F-box/kelch-repeat protein At4g02310.